The chain runs to 282 residues: MTAAADLYCVMGNPIAHSRSPWIHARFAQLTDQSLHYERRLVPLDGFAQALQSFAAEGGRGCNITVPFKLEAAQLATTRSERVQLAGAANTLVFDGGSIHADNTDGLGLVADITQGAGVPLAGRDVLLVGAGGAAAGVLGPLLRQHPRRIAVVNRTPARAQALVDSHAALAALQKTELLALDMQAPGADFDVIINATASSLEGGPVPVPASVLRPGSLAYDMMYGPAAQPFLDWASAHGATARDGLGMLVEQAAEAFLLWRGVRPPSAPVLQELRAAIAAGA.

Residues 18–20 (SRS) and Thr65 each bind shikimate. Lys69 functions as the Proton acceptor in the catalytic mechanism. Glu81 contacts NADP(+). Shikimate is bound by residues Asn90 and Asp105. Residues 130 to 134 (GAGGA), 154 to 159 (NRTPAR), and Met222 each bind NADP(+). Tyr224 contacts shikimate. Gly245 provides a ligand contact to NADP(+).

This sequence belongs to the shikimate dehydrogenase family. Homodimer.

The catalysed reaction is shikimate + NADP(+) = 3-dehydroshikimate + NADPH + H(+). It functions in the pathway metabolic intermediate biosynthesis; chorismate biosynthesis; chorismate from D-erythrose 4-phosphate and phosphoenolpyruvate: step 4/7. Its function is as follows. Involved in the biosynthesis of the chorismate, which leads to the biosynthesis of aromatic amino acids. Catalyzes the reversible NADPH linked reduction of 3-dehydroshikimate (DHSA) to yield shikimate (SA). The protein is Shikimate dehydrogenase (NADP(+)) of Acidovorax ebreus (strain TPSY) (Diaphorobacter sp. (strain TPSY)).